A 920-amino-acid polypeptide reads, in one-letter code: KIN14B-interacting protein At4g14310 (920 aa).

Residues 1–10 (MSASTNRRRL) are compositionally biased toward basic residues. Disordered stretches follow at residues 1-199 (MSAS…EKST) and 309-375 (IDGP…EKPS). A compositionally biased stretch (polar residues) spans 35–54 (PISSKNSNPALQKSLSSKEN). Low complexity predominate over residues 90–105 (TRSTSSGLRGRSSSPS). Residues 112 to 135 (SDLRKRNESRVIGEKGESGQDKKS) show a composition bias toward basic and acidic residues. Polar residues-rich tracts occupy residues 137–147 (LKSSGFKQGTS) and 166–184 (CPVN…NSIS). Over residues 327-337 (LNKEELEDRLL) the composition is skewed to basic and acidic residues. The span at 345-355 (SRTQSKTSSHV) shows a compositional bias: polar residues. A compositionally biased stretch (basic and acidic residues) spans 357-374 (KGHDSVESNKAVNAEEKP). The stretch at 435 to 463 (TEILRANEALEEIDDEENREEMELEEIDD) forms a coiled coil.

In terms of assembly, interacts with KIN14B, CDKA-1, CKS1 and CKS2.

The protein resides in the cytoplasm. Its function is as follows. Might be involved in division plane determination. The chain is KIN14B-interacting protein At4g14310 from Arabidopsis thaliana (Mouse-ear cress).